Reading from the N-terminus, the 291-residue chain is Elongation factor Ts (291 aa).

The tract at residues 81 to 84 is involved in Mg(2+) ion dislocation from EF-Tu; sequence TDFV. Positions 271-291 are disordered; the sequence is EGKEKKDESFADEVMAQVRDS.

The protein belongs to the EF-Ts family.

It localises to the cytoplasm. In terms of biological role, associates with the EF-Tu.GDP complex and induces the exchange of GDP to GTP. It remains bound to the aminoacyl-tRNA.EF-Tu.GTP complex up to the GTP hydrolysis stage on the ribosome. This is Elongation factor Ts from Halorhodospira halophila (strain DSM 244 / SL1) (Ectothiorhodospira halophila (strain DSM 244 / SL1)).